The primary structure comprises 166 residues: UPF0336 protein ML2425 (166 aa).

The MaoC-like domain occupies 10-131 (LIGKHYRQLD…VIAEVRSEVT (122 aa)).

This sequence belongs to the UPF0336 family.

The polypeptide is UPF0336 protein ML2425 (Mycobacterium leprae (strain TN)).